The following is a 140-amino-acid chain: Nucleoside diphosphate kinase (140 aa).

Lys-9, Phe-57, Arg-85, Thr-91, Arg-102, and Asn-112 together coordinate ATP. Catalysis depends on His-115, which acts as the Pros-phosphohistidine intermediate.

This sequence belongs to the NDK family. As to quaternary structure, homotetramer. It depends on Mg(2+) as a cofactor.

It is found in the cytoplasm. The enzyme catalyses a 2'-deoxyribonucleoside 5'-diphosphate + ATP = a 2'-deoxyribonucleoside 5'-triphosphate + ADP. It catalyses the reaction a ribonucleoside 5'-diphosphate + ATP = a ribonucleoside 5'-triphosphate + ADP. Its function is as follows. Major role in the synthesis of nucleoside triphosphates other than ATP. The ATP gamma phosphate is transferred to the NDP beta phosphate via a ping-pong mechanism, using a phosphorylated active-site intermediate. The protein is Nucleoside diphosphate kinase of Chlorobium chlorochromatii (strain CaD3).